The following is a 158-amino-acid chain: MSSGSWSHEVAVNVAAGRMFKAAMLDWHNLGPKIVPDFIAGGSVVSGDGSVGTIREIKINNPAIPFSYVKERLDFVDHDKFEVKQTLVEGGGLGKMFECATTHFKFEPSSNGGCLVKVTASYKILPGVADESAKAKEGITNHMKATEAYLLANPTAYV.

The protein belongs to the BetVI family.

It is found in the cytoplasm. In Asparagus officinalis (Garden asparagus), this protein is Pathogenesis-related protein 1 (PR1).